We begin with the raw amino-acid sequence, 339 residues long: Delta(9)-fatty-acid desaturase fat-6 (339 aa).

Transmembrane regions (helical) follow at residues Val-52–Glu-72, Thr-77–His-97, Tyr-195–Trp-215, and Ala-219–Ile-241.

Belongs to the fatty acid desaturase type 1 family. In terms of tissue distribution, expressed in the intestine in adult worms and in all four larval stages. Additional expression in the hypodermis in all life stages.

Its subcellular location is the membrane. It catalyses the reaction octadecanoyl-CoA + 2 Fe(II)-[cytochrome b5] + O2 + 2 H(+) = (9Z)-octadecenoyl-CoA + 2 Fe(III)-[cytochrome b5] + 2 H2O. The catalysed reaction is hexadecanoyl-CoA + 2 Fe(II)-[cytochrome b5] + O2 + 2 H(+) = (9Z)-hexadecenoyl-CoA + 2 Fe(III)-[cytochrome b5] + 2 H2O. The enzyme catalyses heptadecanoyl-CoA + 2 Fe(II)-[cytochrome b5] + O2 + 2 H(+) = (9Z)-heptadecenoyl-CoA + 2 Fe(III)-[cytochrome b5] + 2 H2O. It carries out the reaction (11E)-octadecenoyl-CoA + 2 Fe(II)-[cytochrome b5] + O2 + 2 H(+) = (9Z,11E)-octadecadienoyl-CoA + 2 Fe(III)-[cytochrome b5] + 2 H2O. The protein operates within lipid metabolism; monounsaturated fatty acid biosynthesis. It participates in lipid metabolism; fatty acid metabolism. Delta(9)-fatty acid desaturase that acts preferentially on stearoyl-CoA (octadecanoyl-CoA) producing the monounsaturated oleoyl-CoA ((9Z)-octadecenoyl-CoA), one of the most abundant monounsaturated fatty acid in Caenorhabditis elegans phospholipids and triacylglycerols. Also acts on palmitoyl-CoA (hexadecanoyl-CoA), heptadecanoyl-CoA and (11E)-octadecenoyl-CoA (trans-vaccenoyl-CoA), the monounsaturated fatty acids (MUFAs) produced are further used as substrates to synthesize polyunsaturated fatty acids (PUFAs) by several other desaturases and elongases. Unlike plants, Caenorhabditis elegans desaturases seem to use fatty acyl-CoAs as substrates. This chain is Delta(9)-fatty-acid desaturase fat-6 (fat-6), found in Caenorhabditis elegans.